A 434-amino-acid chain; its full sequence is D-amino acid dehydrogenase (434 aa).

3–17 (VLVLGSGVIGTTSAW) lines the FAD pocket.

Belongs to the DadA oxidoreductase family. The cofactor is FAD.

It carries out the reaction a D-alpha-amino acid + A + H2O = a 2-oxocarboxylate + AH2 + NH4(+). The protein operates within amino-acid degradation; D-alanine degradation; NH(3) and pyruvate from D-alanine: step 1/1. Functionally, oxidative deamination of D-amino acids. The chain is D-amino acid dehydrogenase from Stenotrophomonas maltophilia (strain R551-3).